Reading from the N-terminus, the 363-residue chain is RNA polymerase I-specific transcription initiation factor RRN5 (363 aa).

Residues L301–E344 form a disordered region. Residues S302–E313 are compositionally biased toward basic and acidic residues. The span at N317–N328 shows a compositional bias: low complexity. A compositionally biased stretch (acidic residues) spans G333–E344.

Component of the UAF (upstream activation factor) complex which consists of UAF30, RRN5, RRN9, RRN10, and histones H3 and H4.

It localises to the nucleus. It is found in the nucleolus. Functionally, component of the UAF (upstream activation factor) complex which interacts with the upstream element of the RNA polymerase I promoter and forms a stable preinitiation complex. Together with SPT15/TBP UAF seems to stimulate basal transcription to a fully activated level. This chain is RNA polymerase I-specific transcription initiation factor RRN5 (RRN5), found in Saccharomyces cerevisiae (strain ATCC 204508 / S288c) (Baker's yeast).